We begin with the raw amino-acid sequence, 176 residues long: Shikimate kinase (176 aa).

An ATP-binding site is contributed by 10–15 (TSGKSS). S14 contacts Mg(2+). Substrate contacts are provided by D32, G81, and R138.

The protein belongs to the shikimate kinase family. Monomer. The cofactor is Mg(2+).

Its subcellular location is the cytoplasm. It catalyses the reaction shikimate + ATP = 3-phosphoshikimate + ADP + H(+). The protein operates within metabolic intermediate biosynthesis; chorismate biosynthesis; chorismate from D-erythrose 4-phosphate and phosphoenolpyruvate: step 5/7. Catalyzes the specific phosphorylation of the 3-hydroxyl group of shikimic acid using ATP as a cosubstrate. This is Shikimate kinase from Chlamydia pneumoniae (Chlamydophila pneumoniae).